We begin with the raw amino-acid sequence, 915 residues long: Coiled-coil domain-containing protein 57 (915 aa).

Positions 1–502 (MLPLGSEPAL…MHGLPRPGAQ (502 aa)) are centrosomal targeting domain. Coiled-coil stretches lie at residues 92–173 (VSEL…QRQE), 214–422 (LEAL…LERD), 456–483 (KSQV…VTLE), and 521–548 (IQRL…LSHQ). 3 disordered regions span residues 555-574 (TAAE…GDAA), 606-653 (PLKM…QAGP), and 724-915 (QHGG…NIMD). The segment at 606–915 (PLKMSSPHAE…PKIRNYNIMD (310 aa)) is microtubule binding domain. The segment covering 613–627 (HAESQPSVRTSTETT) has biased composition (polar residues). Over residues 628–652 (GGSAQAGQAGGSVQAGQAGGSVQAG) the composition is skewed to low complexity. Positions 745–758 (GREDAKSAEDEAPS) are enriched in basic and acidic residues. Polar residues-rich tracts occupy residues 781–794 (PKTQ…TCKS), 819–830 (SHSSSSFASGTL), and 841–852 (SSPSGVTSQGDS). Positions 879–891 (KTAAQAKAKTTGA) are enriched in low complexity.

In terms of assembly, interacts with CEP63; the interaction is required for their location to proximal end of centrioles. Interacts with microtubules.

The protein resides in the cytoplasm. It localises to the cytoskeleton. The protein localises to the microtubule organizing center. Its subcellular location is the centrosome. It is found in the centriolar satellite. The protein resides in the centriole. It localises to the spindle. Its function is as follows. Pleiotropic regulator of centriole duplication, mitosis, and ciliogenesis. Critical interface between centrosome and microtubule-mediated cellular processes. Centriole duplication protein required for recruitment of CEP63, CEP152, and PLK4 to the centrosome. Independent of its centrosomal targeting, localizes to and interacts with microtubules and regulates microtubule nucleation, stability, and mitotic progression. This Homo sapiens (Human) protein is Coiled-coil domain-containing protein 57.